The sequence spans 388 residues: Succinate--CoA ligase [ADP-forming] subunit beta (388 aa).

An ATP-grasp domain is found at 9 to 244; sequence KQLFAEYGLP…PSQDDAREAH (236 aa). ATP contacts are provided by residues lysine 46, 53 to 55, glutamate 99, threonine 102, and glutamate 107; that span reads GRG. Residues asparagine 199 and aspartate 213 each coordinate Mg(2+). Substrate-binding positions include asparagine 264 and 321-323; that span reads GIV.

It belongs to the succinate/malate CoA ligase beta subunit family. In terms of assembly, heterotetramer of two alpha and two beta subunits. Requires Mg(2+) as cofactor.

It carries out the reaction succinate + ATP + CoA = succinyl-CoA + ADP + phosphate. It catalyses the reaction GTP + succinate + CoA = succinyl-CoA + GDP + phosphate. The protein operates within carbohydrate metabolism; tricarboxylic acid cycle; succinate from succinyl-CoA (ligase route): step 1/1. Succinyl-CoA synthetase functions in the citric acid cycle (TCA), coupling the hydrolysis of succinyl-CoA to the synthesis of either ATP or GTP and thus represents the only step of substrate-level phosphorylation in the TCA. The beta subunit provides nucleotide specificity of the enzyme and binds the substrate succinate, while the binding sites for coenzyme A and phosphate are found in the alpha subunit. The sequence is that of Succinate--CoA ligase [ADP-forming] subunit beta from Pseudomonas putida (strain ATCC 700007 / DSM 6899 / JCM 31910 / BCRC 17059 / LMG 24140 / F1).